The primary structure comprises 426 residues: MFKPHLLAVVSRCNSFFGCVDICCNWGNSAPRTLKGLKSVTSEQVFEREQKYGAHNYHHCSAYRAKGVSLDMEGKRYFDFLSAYSAVNQGHCHPKIVNTMVEQAQRLTLTSRAFYTDVLGEYEEFLTKLFNYDKVLPMNTGVEGGETACKIARCWAYMKKKVPENQAKIIFAENNFWGRTLSAISASTDPMSYDELRPYMPGFEIVKYNDTAALEKAFQDPNVCAYMVEPIQGEAGVVALDAGYLTEVRELCTKYNVLFIADEVQTGLARTGRMLAVDHEDVKPDLLILGKALSGGLYPVSAVLRDDHIMDCIQPGLHTAMDVMDPRMRILAASRYYVRVARERCENAQIQATYLRKELNTLPKDVVPVVRGKGLLNAIVINKKFDAWDVCLNLCKPTHGDIIRFATTGHHRGTDPRMCQYYQKYH.

Lys-291 bears the N6-(pyridoxal phosphate)lysine mark.

It belongs to the class-III pyridoxal-phosphate-dependent aminotransferase family. Pyridoxal 5'-phosphate serves as cofactor.

It catalyses the reaction a 2-oxocarboxylate + L-ornithine = L-glutamate 5-semialdehyde + an L-alpha-amino acid. It functions in the pathway amino-acid biosynthesis; L-proline biosynthesis; L-glutamate 5-semialdehyde from L-ornithine: step 1/1. This is Ornithine aminotransferase from Vigna aconitifolia (Moth bean).